Reading from the N-terminus, the 1202-residue chain is MGAMAYSLLLCLLLAHLGLGEVGASLDPSERPDSSRERTSRGKQHGQQLPRASAPDPSIPWSRSTDGTILAQKLAEEVPMDVASYLYTGDFHQLKRANCSGRYELAGLPGKSPSLASSHPSLHGALDTLTHATNFLNMMLQSNKSREQTVQDDLQWYQALVRSLLEGEPSISRAAITFSTESLSTPAPQVFLQATREESRILLQDLSSSAHHLANATLETEWFHGLRRKWRPHLHRRGSNQGPRGLGHSWRRRDGLGGDRSHVKWSPPFLECENGSYKPGWLVTLSAAFYGLQPNLVPEFRGVMKVDINLQKVDIDQCSSDGWFSGTHKCHLNNSECMPIKGLGFVLGAYQCVCKAGFYHPRVFSVNNFQRRGPDHHFSGSTKDVSEEAHVCLPCREGCPFCADDRPCFVQEDKYLRLAIISFQALCMLLDFVSMLVVYHFRKAKSIRASGLILLETILFGSLLLYFPVVILYFEPSTFRCILLRWVRLLGFATVYGTVTLKLHRVLKVFLSRTAQRIPYMTGGRVMRMLAVIVLVVFWFLVGWTSSMCQNLERDILLVGQGQTSDNLTFNMCLIDRWDYMTAVAEFLFLLWGIYLCYAVRTVPSAFHEPRYMAVAVHNELIITAIFHTIRFVLASRLQPDWMLMLYFAHTHLTVTVTIGLLLIPKFSHSSNNPRDDIATEAYEDELDMGRSGSYLNSSINSAWSEHSLDPEDIRDELKKLYAQLEIYKRKKMITNNPHLQKKRCSKKGLGRSIMRRITEIPETVSRQCSKEDKEGTDHSAAKGTGLVRKNPTESSGNTGRPKEESLKNRVFSLKKSHSTYDHVRDQTDESSSLPTESQEEEVTENSTLESLSSKKLTQKVKEDSEAESTESVPLVCKSASAHNLSSEKKPGHPRTSMLQKSLSVIASAKEKTLGLAGKTQTLVMEDRAKSQKPQPKDRETNRKYSNSDNTETNPNSNHTEELRKPQKSGIMKQQRVNLPTANPDASSSTTQIKDNFDIGEVCPWEVYDLTPGPVPSEPKAQKHVSIAASEVEQNPASFSKEKSHHKPKAAEGLYQANHKSIDKTEVCPWESHGQSPLEDENRLISKTPVLPGRAREENGSQLYTTNMCAGQYEELPPKAVASKVENENLNQMGDQEKQTSSSVDIIPGSCISSNNSPQPLTSRAEVCPWEFEPLEQPNAERIVALPASSALSASKIPGPRK.

The signal sequence occupies residues methionine 1–alanine 24. Residues serine 25–serine 62 form a disordered region. Residues serine 25–arginine 417 lie on the Extracellular side of the membrane. The segment covering proline 28–serine 40 has biased composition (basic and acidic residues). The tract at residues tyrosine 85–tryptophan 281 is cache-like region. Residues asparagine 98 and asparagine 143 are each glycosylated (N-linked (GlcNAc...) asparagine). Residues cysteine 99 and cysteine 272 are joined by a disulfide bond. Residues serine 172 and arginine 173 each coordinate glycine. An N-linked (GlcNAc...) asparagine glycan is attached at asparagine 215. Positions leucine 234–arginine 253 are disordered. Glutamate 271 contacts glycine. A glycan (N-linked (GlcNAc...) asparagine) is linked at asparagine 274. Aspartate 307 is a glycine binding site. An N-linked (GlcNAc...) asparagine glycan is attached at asparagine 333. Residues leucine 418–tyrosine 439 traverse the membrane as a helical segment. Residues histidine 440–glycine 451 lie on the Cytoplasmic side of the membrane. Residues leucine 452–phenylalanine 474 traverse the membrane as a helical segment. The Extracellular portion of the chain corresponds to glutamate 475 to threonine 478. Residues phenylalanine 479 to leucine 501 form a helical membrane-spanning segment. Cysteine 481 and cysteine 573 form a disulfide bridge. The Cytoplasmic segment spans residues lysine 502–arginine 525. The helical transmembrane segment at valine 526 to serine 547 threads the bilayer. Residues methionine 548–aspartate 576 are Extracellular-facing. The chain crosses the membrane as a helical span at residues arginine 577 to cysteine 597. The Cytoplasmic segment spans residues tyrosine 598–arginine 611. A helical membrane pass occupies residues tyrosine 612–valine 633. Topologically, residues leucine 634–tryptophan 642 are extracellular. A helical transmembrane segment spans residues methionine 643–isoleucine 664. Over proline 665 to lysine 1202 the chain is Cytoplasmic. A phosphoserine mark is found at serine 694, serine 705, and serine 708. Disordered stretches follow at residues arginine 757–leucine 899 and leucine 914–aspartate 995. 2 stretches are compositionally biased toward basic and acidic residues: residues cysteine 769–alanine 781 and serine 819–threonine 828. Lysine 774 is covalently cross-linked (Glycyl lysine isopeptide (Lys-Gly) (interchain with G-Cter in ubiquitin)). Residues glutamate 845–lysine 856 show a composition bias toward low complexity. The residue at position 865 (serine 865) is a Phosphoserine. A compositionally biased stretch (basic and acidic residues) spans methionine 925–arginine 943. 2 stretches are compositionally biased toward polar residues: residues lysine 944–asparagine 958 and glutamine 975–lysine 994. Position 946 is a phosphoserine (serine 946). Residues valine 1002–glutamate 1006 carry the VCPWE motif 1 motif. Serine 1061 is subject to Phosphoserine. Positions valine 1067–glutamate 1071 match the VCPWE motif 2 motif. Serine 1076 carries the post-translational modification Phosphoserine. 2 stretches are compositionally biased toward polar residues: residues glutamine 1132–valine 1144 and cysteine 1151–threonine 1162. Residues glutamine 1132–threonine 1162 are disordered. Positions valine 1167–glutamate 1171 match the VCPWE motif 3 motif.

Belongs to the G-protein coupled receptor 3 family. As to quaternary structure, homodimer. Associates with the RGS7-GNB5 complex, promoting its localization to the cell membrane and regulating its GTPase activator activity. Interacts (via VCPWE motifs) with GNAO1. Interacts with GPC4. Interacts with EGFLAM.

The protein resides in the cell membrane. Its subcellular location is the postsynaptic cell membrane. The protein localises to the presynaptic cell membrane. It is found in the nucleus. Its function is as follows. Metabotropic receptor for glycine that controls synapse formation and function in the brain. Acts as an atypical G-protein coupled receptor that recruits and regulates the RGS7-GNB5 complex instead of activating G proteins. In absence of glycine ligand, promotes the GTPase activator activity of RGS7, increasing the GTPase activity of G protein alpha subunits, thereby driving them into their inactive GDP-bound form. Glycine-binding changes the conformation of the intracellular surface, inhibiting the GTPase activator activity of the RGS7-GNB5 complex, promoting G protein alpha subunits into their active GTP-bound form and regulating cAMP levels. Also able to bind taurine, a compound closely related to glycine, but with a two-fold lower affinity. Glycine receptor-dependent regulation of cAMP controls key ion channels, kinases and neurotrophic factors involved in neuronal excitability and synaptic transmission. Plays a pivotal role in regulating mood and cognition via its ability to regulate neuronal excitability in L2/L3 pyramidal neurons of the prefrontal cortex. Also involved in spatial learning by regulating hippocampal CA1 neuronal excitability. Acts as a synaptic organizer in the hippocampus, required for proper mossy fiber-CA3 neurocircuitry establishment, structure and function: induces presynaptic differentiation in contacting axons via its interaction with GPC4. In addition to glycine, may also act as a receptor for osteocalcin (BGLAP) hormone: osteocalcin-binding initiates a signaling response that prevents neuronal apoptosis in the hippocampus and regulates the synthesis of neurotransmitters. The protein is Metabotropic glycine receptor of Rattus norvegicus (Rat).